Consider the following 381-residue polypeptide: Queuine tRNA-ribosyltransferase (381 aa).

Asp92 functions as the Proton acceptor in the catalytic mechanism. Residues 92-96, Asp146, Gln190, and Gly217 contribute to the substrate site; that span reads DSGGF. The segment at 248-254 is RNA binding; it reads GVGRPED. Catalysis depends on Asp267, which acts as the Nucleophile. The segment at 272 to 276 is RNA binding; important for wobble base 34 recognition; sequence TRNAR. Positions 305, 307, 310, and 337 each coordinate Zn(2+).

This sequence belongs to the queuine tRNA-ribosyltransferase family. As to quaternary structure, homodimer. Within each dimer, one monomer is responsible for RNA recognition and catalysis, while the other monomer binds to the replacement base PreQ1. The cofactor is Zn(2+).

It carries out the reaction 7-aminomethyl-7-carbaguanine + guanosine(34) in tRNA = 7-aminomethyl-7-carbaguanosine(34) in tRNA + guanine. It functions in the pathway tRNA modification; tRNA-queuosine biosynthesis. In terms of biological role, catalyzes the base-exchange of a guanine (G) residue with the queuine precursor 7-aminomethyl-7-deazaguanine (PreQ1) at position 34 (anticodon wobble position) in tRNAs with GU(N) anticodons (tRNA-Asp, -Asn, -His and -Tyr). Catalysis occurs through a double-displacement mechanism. The nucleophile active site attacks the C1' of nucleotide 34 to detach the guanine base from the RNA, forming a covalent enzyme-RNA intermediate. The proton acceptor active site deprotonates the incoming PreQ1, allowing a nucleophilic attack on the C1' of the ribose to form the product. After dissociation, two additional enzymatic reactions on the tRNA convert PreQ1 to queuine (Q), resulting in the hypermodified nucleoside queuosine (7-(((4,5-cis-dihydroxy-2-cyclopenten-1-yl)amino)methyl)-7-deazaguanosine). The sequence is that of Queuine tRNA-ribosyltransferase from Xanthomonas campestris pv. campestris (strain B100).